Consider the following 323-residue polypeptide: Pantothenate kinase (323 aa).

101-108 (GSVAVGKS) lines the ATP pocket.

This sequence belongs to the prokaryotic pantothenate kinase family.

The protein resides in the cytoplasm. The catalysed reaction is (R)-pantothenate + ATP = (R)-4'-phosphopantothenate + ADP + H(+). It participates in cofactor biosynthesis; coenzyme A biosynthesis; CoA from (R)-pantothenate: step 1/5. This chain is Pantothenate kinase, found in Xanthobacter autotrophicus (strain ATCC BAA-1158 / Py2).